The chain runs to 322 residues: tRNA uridine(34) hydroxylase (322 aa).

The Rhodanese domain occupies Gln125–Glu219. Residue Cys179 is the Cysteine persulfide intermediate of the active site.

Belongs to the TrhO family.

The catalysed reaction is uridine(34) in tRNA + AH2 + O2 = 5-hydroxyuridine(34) in tRNA + A + H2O. Functionally, catalyzes oxygen-dependent 5-hydroxyuridine (ho5U) modification at position 34 in tRNAs. The protein is tRNA uridine(34) hydroxylase of Bacillus licheniformis (strain ATCC 14580 / DSM 13 / JCM 2505 / CCUG 7422 / NBRC 12200 / NCIMB 9375 / NCTC 10341 / NRRL NRS-1264 / Gibson 46).